Consider the following 221-residue polypeptide: Phosphoribosylformylglycinamidine synthase subunit PurQ (221 aa).

The region spanning Asn-2–Ala-221 is the Glutamine amidotransferase type-1 domain. Cys-86 serves as the catalytic Nucleophile. Residues His-194 and Glu-196 contribute to the active site.

As to quaternary structure, part of the FGAM synthase complex composed of 1 PurL, 1 PurQ and 2 PurS subunits.

Its subcellular location is the cytoplasm. It catalyses the reaction N(2)-formyl-N(1)-(5-phospho-beta-D-ribosyl)glycinamide + L-glutamine + ATP + H2O = 2-formamido-N(1)-(5-O-phospho-beta-D-ribosyl)acetamidine + L-glutamate + ADP + phosphate + H(+). The catalysed reaction is L-glutamine + H2O = L-glutamate + NH4(+). It participates in purine metabolism; IMP biosynthesis via de novo pathway; 5-amino-1-(5-phospho-D-ribosyl)imidazole from N(2)-formyl-N(1)-(5-phospho-D-ribosyl)glycinamide: step 1/2. Functionally, part of the phosphoribosylformylglycinamidine synthase complex involved in the purines biosynthetic pathway. Catalyzes the ATP-dependent conversion of formylglycinamide ribonucleotide (FGAR) and glutamine to yield formylglycinamidine ribonucleotide (FGAM) and glutamate. The FGAM synthase complex is composed of three subunits. PurQ produces an ammonia molecule by converting glutamine to glutamate. PurL transfers the ammonia molecule to FGAR to form FGAM in an ATP-dependent manner. PurS interacts with PurQ and PurL and is thought to assist in the transfer of the ammonia molecule from PurQ to PurL. This chain is Phosphoribosylformylglycinamidine synthase subunit PurQ, found in Synechococcus sp. (strain ATCC 27144 / PCC 6301 / SAUG 1402/1) (Anacystis nidulans).